The primary structure comprises 340 residues: Ketol-acid reductoisomerase (NADP(+)) (340 aa).

In terms of domain architecture, KARI N-terminal Rossmann spans Met-1–Thr-182. NADP(+) contacts are provided by residues Tyr-24–Gln-27, Arg-48, Ser-51, Ser-53, and Asp-83–Gln-86. His-108 is an active-site residue. Gly-134 provides a ligand contact to NADP(+). One can recognise a KARI C-terminal knotted domain in the interval Asn-183–Ile-329. Mg(2+) contacts are provided by Asp-191, Glu-195, Glu-227, and Glu-231. A substrate-binding site is contributed by Ser-252.

The protein belongs to the ketol-acid reductoisomerase family. Requires Mg(2+) as cofactor.

The catalysed reaction is (2R)-2,3-dihydroxy-3-methylbutanoate + NADP(+) = (2S)-2-acetolactate + NADPH + H(+). It carries out the reaction (2R,3R)-2,3-dihydroxy-3-methylpentanoate + NADP(+) = (S)-2-ethyl-2-hydroxy-3-oxobutanoate + NADPH + H(+). Its pathway is amino-acid biosynthesis; L-isoleucine biosynthesis; L-isoleucine from 2-oxobutanoate: step 2/4. The protein operates within amino-acid biosynthesis; L-valine biosynthesis; L-valine from pyruvate: step 2/4. In terms of biological role, involved in the biosynthesis of branched-chain amino acids (BCAA). Catalyzes an alkyl-migration followed by a ketol-acid reduction of (S)-2-acetolactate (S2AL) to yield (R)-2,3-dihydroxy-isovalerate. In the isomerase reaction, S2AL is rearranged via a Mg-dependent methyl migration to produce 3-hydroxy-3-methyl-2-ketobutyrate (HMKB). In the reductase reaction, this 2-ketoacid undergoes a metal-dependent reduction by NADPH to yield (R)-2,3-dihydroxy-isovalerate. In Roseobacter denitrificans (strain ATCC 33942 / OCh 114) (Erythrobacter sp. (strain OCh 114)), this protein is Ketol-acid reductoisomerase (NADP(+)).